Here is a 454-residue protein sequence, read N- to C-terminus: MIKILRNINNNIVNRYDGLNKSYLNINFYCSTTNNSSGKIDYTKLIPENGNISKSITEKIGKNLHCKRDHPLNIIKKKIQYHFQNKLSDEEHKFQFFDSFEPKVSVKENFDELLFPVDHVGRSPNDTYYFSKDQLLRTHTSAHQSQLLREQEKAFLVTGDVYRRDTIDAVHYPVFHQMEGVKVFKDKVNLAIDGKPFDETIDYYEDNNYKQLQSVKDVEKDLKQSLESMIRSVIGQDLQVRWIDAYFPFTSPSFEMEIYFQGQWLEVLGCGVVHPSIMNNCGLSNDRAWAFGIGLERLAMILFNIPDIRLFWTEDNRFHNQFKGVDKSISTSSSSSSSSSSSSSSTLSDIDIKGVQFQQFSKYPSCFKDVSFWLEDEENFHENKFYEFVRESCGDLVERVDLVDNFTNKKLNKTSHCYRIYYRSMDRNLTNEEIDILQFNLREKLENHLSVKLR.

Substrate-binding positions include 141-144 (SAHQ), Arg-163, 170-172 (VHY), 177-179 (QME), Glu-266, and Phe-291. The interval 327–347 (KSISTSSSSSSSSSSSSSSTL) is disordered. The span at 328–347 (SISTSSSSSSSSSSSSSSTL) shows a compositional bias: low complexity. The 94-residue stretch at 361–454 (SKYPSCFKDV…LENHLSVKLR (94 aa)) folds into the FDX-ACB domain.

It belongs to the class-II aminoacyl-tRNA synthetase family. As to quaternary structure, monomer.

The protein localises to the mitochondrion matrix. The enzyme catalyses tRNA(Phe) + L-phenylalanine + ATP = L-phenylalanyl-tRNA(Phe) + AMP + diphosphate + H(+). Is responsible for the charging of tRNA(Phe) with phenylalanine in mitochondrial translation. The polypeptide is Phenylalanine--tRNA ligase, mitochondrial (mpheS) (Dictyostelium discoideum (Social amoeba)).